Reading from the N-terminus, the 309-residue chain is Porphobilinogen deaminase (309 aa).

Cysteine 244 carries the S-(dipyrrolylmethanemethyl)cysteine modification.

It belongs to the HMBS family. In terms of assembly, monomer. Dipyrromethane is required as a cofactor.

The catalysed reaction is 4 porphobilinogen + H2O = hydroxymethylbilane + 4 NH4(+). It functions in the pathway porphyrin-containing compound metabolism; protoporphyrin-IX biosynthesis; coproporphyrinogen-III from 5-aminolevulinate: step 2/4. Its function is as follows. Tetrapolymerization of the monopyrrole PBG into the hydroxymethylbilane pre-uroporphyrinogen in several discrete steps. In Listeria monocytogenes serotype 4a (strain HCC23), this protein is Porphobilinogen deaminase.